A 160-amino-acid polypeptide reads, in one-letter code: Large ribosomal subunit protein uL22c (160 aa).

The protein belongs to the universal ribosomal protein uL22 family. Part of the 50S ribosomal subunit.

It is found in the plastid. It localises to the chloroplast. This protein binds specifically to 23S rRNA. In terms of biological role, the globular domain of the protein is located near the polypeptide exit tunnel on the outside of the subunit, while an extended beta-hairpin is found that lines the wall of the exit tunnel in the center of the 70S ribosome. In Arabis hirsuta (Hairy rock-cress), this protein is Large ribosomal subunit protein uL22c (rpl22).